Here is a 149-residue protein sequence, read N- to C-terminus: L-alanine exporter AlaE (149 aa).

The next 4 membrane-spanning stretches (helical) occupy residues 16–36 (FAMV…LSGM), 46–66 (LVAI…RDAI), 85–105 (VLAY…TVGA), and 112–132 (AAVS…GYFL).

Belongs to the AlaE exporter family.

The protein localises to the cell inner membrane. Its function is as follows. Exports L-alanine. This is L-alanine exporter AlaE from Citrobacter koseri (strain ATCC BAA-895 / CDC 4225-83 / SGSC4696).